A 470-amino-acid polypeptide reads, in one-letter code: Aspartyl aminopeptidase (470 aa).

His92 provides a ligand contact to Zn(2+). His166 lines the substrate pocket. Asp263 contributes to the Zn(2+) binding site. Residue Glu299 coordinates substrate. Zn(2+) contacts are provided by Glu300 and Asp343. Substrate is bound by residues Asp343, His346, Lys371, and Tyr378. His437 is a binding site for Zn(2+).

This sequence belongs to the peptidase M18 family. Tetrahedron-shaped homododecamer built from six homodimers. Requires Zn(2+) as cofactor. Expressed in various cell types and tissues including the pharynx, neurons, body wall muscle, intestine and vulva.

It localises to the cytoplasm. The protein resides in the cytosol. The catalysed reaction is Release of an N-terminal aspartate or glutamate from a peptide, with a preference for aspartate.. Its function is as follows. Aminopeptidase with specificity towards an acidic amino acid at the N-terminus. Plays a role in membrane trafficking and is specifically involved in the recycling and degradation of endocytic cargo. The chain is Aspartyl aminopeptidase from Caenorhabditis elegans.